Consider the following 116-residue polypeptide: NADH dehydrogenase [ubiquinone] 1 alpha subcomplex subunit 5 (116 aa).

Ala-2 carries the post-translational modification N-acetylalanine. 4 positions are modified to N6-acetyllysine: Lys-30, Lys-36, Lys-46, and Lys-60. Ser-89 carries the phosphoserine modification. Lys-98 is modified (N6-acetyllysine; alternate). Lys-98 carries the N6-succinyllysine; alternate modification.

Belongs to the complex I NDUFA5 subunit family. In terms of assembly, complex I is composed of 45 different subunits. Acetylation of Lys-98 is observed in liver mitochondria from fasted mice but not from fed mice.

It localises to the mitochondrion inner membrane. Its function is as follows. Accessory subunit of the mitochondrial membrane respiratory chain NADH dehydrogenase (Complex I), that is believed not to be involved in catalysis. Complex I functions in the transfer of electrons from NADH to the respiratory chain. The immediate electron acceptor for the enzyme is believed to be ubiquinone. This is NADH dehydrogenase [ubiquinone] 1 alpha subcomplex subunit 5 (Ndufa5) from Mus musculus (Mouse).